The chain runs to 672 residues: uncharacterized protein (672 aa).

This sequence belongs to the MG032/MG096/MG288 family.

This is an uncharacterized protein from Mycoplasma pneumoniae (strain ATCC 29342 / M129 / Subtype 1) (Mycoplasmoides pneumoniae).